We begin with the raw amino-acid sequence, 1033 residues long: NACHT, LRR and PYD domains-containing protein 3 (1033 aa).

One can recognise a Pyrin domain in the interval 1–91; it reads MTSVRCKLAQ…WEKAKKDQPE (91 aa). S3 carries the post-translational modification Phosphoserine. C6 and C104 are disulfide-bonded. Y11 is modified (phosphotyrosine). C126 carries the S-palmitoyl cysteine lipid modification. Residues 127–130 are required for binding to phosphatidylinositol 4-phosphate (PtdIns4P); the sequence is KKKK. Y132, Y136, and Y145 each carry phosphotyrosine; by BTK. The region spanning 136 to 206 is the FISNA domain; that stretch reads YRRHVRSRFY…SSLKLELLFE (71 aa). Position 157 is a phosphoserine (S157). A Phosphotyrosine; by BTK modification is found at Y164. Position 165 (T165) interacts with ATP. S194 is modified (phosphoserine; by MAPK8). S197 carries the phosphoserine modification. The region spanning 216 to 532 is the NACHT domain; it reads HTVVFQGAAG…EFFAAMYYLL (317 aa). Residue 222 to 230 coordinates ATP; sequence GAAGIGKTI. Residue S261 is modified to Phosphoserine. A Phosphoserine; by PKD/PRKD1 modification is found at S291. A Glycyl lysine isopeptide (Lys-Gly) (interchain with G-Cter in ubiquitin) cross-link involves residue K320. S330 is subject to Phosphoserine. The KFERQ-like motif 1 signature appears at 351 to 355; sequence LEKLQ. K426 is covalently cross-linked (Glycyl lysine isopeptide (Lys-Gly) (interchain with G-Cter in ubiquitin)). H518 serves as a coordination point for ATP. A KFERQ-like motif 2 motif is present at residues 601–605; that stretch reads QVRLE. K687 is covalently cross-linked (Glycyl lysine isopeptide (Lys-Gly) (interchain with G-Cter in ubiquitin)). Residues S725 and S732 each carry the phosphoserine modification. 5 LRR repeats span residues 739-759, 768-789, 796-816, 825-846, and 853-873; these read SLTE…RVLC, NIQR…DISS, KLVE…RLLC, NLQK…DLAL, and SLTR…QVLC. A KFERQ-like motif 3 motif is present at residues 795-799; the sequence is QKLVE. Phosphoserine; by CSNK1A1 is present on S803. Residues C834, C835, and C841 are each lipidated (S-palmitoyl cysteine). Y858 bears the Phosphotyrosine mark. A Glycyl lysine isopeptide (Lys-Gly) (interchain with G-Cter in ubiquitin) cross-link involves residue K875. 4 LRR repeats span residues 882–903, 910–930, 939–960, and 967–988; these read NLQK…ALTS, NFTH…RLLC, KLQM…NLST, and SLRK…TLCE. Residue C955 is the site of S-palmitoyl cysteine attachment. Residue K970 forms a Glycyl lysine isopeptide (Lys-Gly) (interchain with G-Cter in ubiquitin) linkage. A KFERQ-like motif 4 motif is present at residues 988 to 992; the sequence is EVLKQ. The residue at position 1032 (S1032) is a Phosphoserine.

It belongs to the NLRP family. In terms of assembly, sensor component of NLRP3 inflammasomes; inflammasomes are supramolecular complexes that assemble in the cytosol in response to pathogens and other damage-associated signals and play critical roles in innate immunity and inflammation. The core of NLRP3 inflammasomes consists of a signal sensor component (NLRP3), an adapter (PYCARD/ASC), which recruits an effector pro-inflammatory caspase (CASP1 and, possibly, CASP4 and CASP5). Homodecamer; inactive NLRP3 forms homodecameric double-ring cages that hide pyrin domains within NACHT-LRR rings to avoid premature activation. Interacts (via pyrin domain) with PYCARD/ASC (via pyrin domain); interaction is direct. Interacts (via LRR repeat domain) with NEK7 (via N-terminus); the interaction is required for the formation of the complex NLRP3:PYCARD, oligomerization of PYCARD/ASC and activation of CASP1. Interacts (via LRR repeat domain) with NR4A1/Nur77 (via N-terminus); the interaction is direct, requires activation of NR4A1 by its ligands NBRE-containing dsDNA and lipopolysaccharide, and stimulates the association of NLRP3 with NEK7 for non-canonical NLRP3 inflammasome activation. Interacts with CARD8; leading to inhibit formation of the NLRP3 inflammasome. Interacts with MEFV; this interaction targets NLRP3 to degradation by autophagy, hence preventing excessive IL1B- and IL18-mediated inflammation. Interacts with EIF2AK2/PKR; this interaction requires EIF2AK2 activity, is accompanied by EIF2AK2 autophosphorylation and promotes inflammasome assembly in response to specific stimuli. Interacts with GBP5 (via DAPIN domain); this interaction promotes inflammasome assembly in response to microbial and soluble, but not crystalline, agents. Interacts with PML (isoform PML-1) (via the leucine-rich repeat (LRR) domain); PML-mediated increase in NLRP3 inflammasome activation does not depend upon this interaction. Interacts (via NACHT domain) with DHX33 (via DEAH box); NLRP3 activation in presence of cytosolic dsRNA is mediated by DHX33. Interacts (via NACHT and LRR domains) with ARRB2; this interaction is direct and inducible by polyunsaturated fatty acids (PUFAs). Interacts (via NACHT domain) with DDX3X under both LPS-primed and inflammasome-activating conditions. Interacts with IRF4 (via the LRR domain); this interaction is direct and is required for optimal IRF4 binding to IL4 promoter and efficient IL4 transactivation during differentiation of Th2 helper T-cells. Interacts with MAVS; promoting localization to mitochondria and activation of the NLRP3 inflammasome. Interacts with MARK4; promoting localization of NLRP3 to the microtubule organizing center (MTOC). Interacts with TRIM50; this interaction also promotes NLRP3 oligomerization and subsequent inflammasome activation. Interacts with IRGM; preventing NLRP3 inflammasome assembly and promoting NLRP3 degradation. Interacts (via KFERQ-like motifs) with HSPA8/HSC70; promoting NLRP3 degradation by the chaperone-mediated autophagy pathway. Interacts (via NACHT and LLR domains) with ABHD8; this interaction is enhanced in the presence of NLRP3 inflammasome inducers, such as ATP, nigericin, silica, or alum. Interaction with ABHD8 leads the recruitment of ZDHHC12, hence facilitating NLRP3 palmitoylation and degradation by the chaperone-mediated autophagy pathway (CMA), therefore attenuating NLRP3 inflammasome activation. Phosphorylation at Ser-194 by MAPK8/JNK1 increases inflammasome activation by promoting deubiquitination by BRCC3 and NLRP3 homooligomerization. Phosphorylation at Ser-803 by CSNK1A1 prevents inflammasome activation by preventing NEK7 recruitment. Phosphorylation at Ser-3 in the pyrin domain inhibits homomultimerization of NLRP3 and activation of the NLRP3 inflammasome: dephosphorylation by protein phosphatase 2A (PP2A) promotes assembly of the NLRP3 inflammasome. Phosphorylation at Ser-291 by PKD/PRKD1 promotes NLRP3 inflammasome assembly. Phosphorylation by ERK1/MAPK3 promotes NLRP3 inflammasome assembly. Phosphorylation by BTK (at Tyr-132, Tyr-136, Tyr-145 and Tyr-164) in the region that mediates binding to phosphatidylinositol phosphate, promotes relocalization of NLRP3 and assembly of the NLRP3 inflammasome. Phosphorylation at Tyr-858 inhibits NLRP3 inflammasome assembly: dephosphorylation by PTPN22 promotes inflammasome activation Phosphorylated by LATS1 and LATS2 at Ser-261 following palmitoylation by ZDHHC1, promoting its relocalization to the microtubule organizing center (MTOC), where NLRP3 is activated by NEK7, leading to inflammasome assembly and activation. In terms of processing, ubiquitinated; undergoes both 'Lys-48'- and 'Lys-63'-linked polyubiquitination. Ubiquitination does not lead to degradation, but inhibits inflammasome activation. Deubiquitination is catalyzed by BRCC3 and associated with NLRP3 activation and inflammasome assembly. This process can be induced by the activation of Toll-like receptors (by LPS), through a non-transcriptional pathway dependent on the mitochondrial production of reactive oxygen species, and by ATP. Ubiquitinated by TRIM31 via 'Lys-48'-linked ubiquitination, leading to its degradation by the proteasome. Ubiquitinated at Lys-687 by the SCF(FBXL2) complex, leading to its degradation by the proteasome. Ubiquitinated by TRIM35 via 'lys-48' and 'Lys-63'-linked ubiquitination leading to inhibition of NLRP3 inflammasome activation. Undergoes 'Lys-27'-linked polyubiquitination by MARCHF5, leading to NLRP3-NEK7 complex formation and NLRP3 oligomerization. Post-translationally, the disulfide bond in the pyrin domain might play a role in reactive oxygen species-mediated activation. Palmitoylation by ZDHHC12 promotes NLRP3 degradation by the chaperone-mediated autophagy pathway (CMA) and therefore limits NLRP3 inflammasome activation. Interaction with ZDHHC12, and hence NLRP3 palmitoylation, is enhanced by ABHD8. Following palmitoylation, HSPA8/HSC70 recognizes and binds the KFERQ-like motifs on NLRP3 and promotes NLRP3 recruitment to lysosomes, where it is degraded via the chaperone-mediated autophagy pathway in a LAMP2-dependent process. Palmitoylation at Cys-834 and Cys-835 by ZDHHC5 enhances its binding to NEK7 leading to inflammasome assembly and activation. Palmitoylation at Cys-126 and Cys-955 by ZDHHC1 facilitates phosphorylation at Ser-261 by LATS1 and LATS2, promoting its relocalization to the microtubule organizing center (MTOC), where NLRP3 is activated by NEK7, leading to inflammasome assembly and activation. Depalmitoylated by ABHD17A. In terms of processing, degraded via selective autophagy following interaction with Irgm1. Irgm1 promotes NLRP3 recruitment to autophagosome membranes, promoting its SQSTM1/p62-dependent autophagy-dependent degradation. Expressed with high levels in peripheral blood leukocytes, including Th2 lymphocytes and macrophages. Expressed at low levels in resting osteoblasts (at protein level).

Its subcellular location is the cytoplasm. The protein resides in the cytosol. It localises to the inflammasome. It is found in the cytoskeleton. The protein localises to the microtubule organizing center. Its subcellular location is the golgi apparatus membrane. The protein resides in the endoplasmic reticulum. It localises to the mitochondrion. It is found in the secreted. The protein localises to the nucleus. It catalyses the reaction ATP + H2O = ADP + phosphate + H(+). Under resting conditions, NLRP3 binds ADP and is autoinhibited. Inactive NLRP3 forms homodecameric double-ring cages that hide pyrin domains within NACHT-LRR rings to avoid premature activation. NLRP3 activation stimuli include extracellular ATP, nigericin, reactive oxygen species, crystals of monosodium urate or cholesterol, amyloid-beta fibers, environmental or industrial particles and nanoparticles, such as asbestos, silica, aluminum salts, cytosolic dsRNA, etc. Almost all stimuli trigger intracellular K(+) efflux. These stimuli lead to membrane perturbations that induce activation of NLRP3. Upon activation, NLRP3 is transported to microtubule organizing center (MTOC), where it is unlocked by NEK7, leading to its relocalization to dispersed trans-Golgi network (dTGN) vesicle membranes and recruitment of PYCARD/ASC for the formation of an active inflammasome complex. NEK7-activated NLRP3 forms a disk-shaped inflammasome. NLRP3 and PYCARD/ASC interact via their respective pyrin domains; interaction initiates speck formation (nucleation) which greatly enhances further addition of soluble PYCARD/ASC molecules to the speck in a prion-like polymerization process. Clustered PYCARD/ASC nucleates the formation of CASP1 filaments through the interaction of their respective CARD domains, acting as a platform for CASP1 polymerization and activation. Active CASP1 then processes IL1B and IL18 precursors, leading to the release of mature cytokines in the extracellular milieu and inflammatory response. NLRP3 inflammasome assembly is inhibited by IRGM, which impedes NLRP3 oligomerization. NLRP3 inflammasome is inhibited by cyclic AMP (cAMP), which directly binds NLRP3; inhibition is relieved by calcium-sensing receptor CASR, which inhibits production of cAMP. Specifically inhibited by sulfonylurea MCC950 (also named CP-456,773, CRID3), a potent and specific small-molecule inhibitor of the NLRP3 inflammasome that acts by preventing ATP hydrolysis. Sensor component of the NLRP3 inflammasome, which mediates inflammasome activation in response to defects in membrane integrity, leading to secretion of inflammatory cytokines IL1B and IL18 and pyroptosis. In response to pathogens and other damage-associated signals that affect the integrity of membranes, initiates the formation of the inflammasome polymeric complex composed of NLRP3, CASP1 and PYCARD/ASC. Recruitment of pro-caspase-1 (proCASP1) to the NLRP3 inflammasome promotes caspase-1 (CASP1) activation, which subsequently cleaves and activates inflammatory cytokines IL1B and IL18 and gasdermin-D (GSDMD), promoting cytokine secretion and pyroptosis. Activation of NLRP3 inflammasome is also required for HMGB1 secretion; stimulating inflammatory responses. Under resting conditions, ADP-bound NLRP3 is autoinhibited. NLRP3 activation stimuli include extracellular ATP, nigericin, reactive oxygen species, crystals of monosodium urate or cholesterol, amyloid-beta fibers, environmental or industrial particles and nanoparticles, such as asbestos, silica, aluminum salts, cytosolic dsRNA, etc. Almost all stimuli trigger intracellular K(+) efflux. These stimuli lead to membrane perturbation and activation of NLRP3. Upon activation, NLRP3 is transported to microtubule organizing center (MTOC), where it is unlocked by NEK7, leading to its relocalization to dispersed trans-Golgi network (dTGN) vesicle membranes and formation of an active inflammasome complex. Associates with dTGN vesicle membranes by binding to phosphatidylinositol 4-phosphate (PtdIns4P). Shows ATPase activity. In terms of biological role, independently of inflammasome activation, regulates the differentiation of T helper 2 (Th2) cells and has a role in Th2 cell-dependent asthma and tumor growth. During Th2 differentiation, required for optimal IRF4 binding to IL4 promoter and for IRF4-dependent IL4 transcription. Binds to the consensus DNA sequence 5'-GRRGGNRGAG-3'. May also participate in the transcription of IL5, IL13, GATA3, CCR3, CCR4 and MAF. This chain is NACHT, LRR and PYD domains-containing protein 3, found in Mus musculus (Mouse).